Here is a 511-residue protein sequence, read N- to C-terminus: Adenosine deaminase 2 (511 aa).

The first 29 residues, Met-1–Ser-29, serve as a signal peptide directing secretion. The tract at residues Ile-30 to Asn-100 is dimerization. Zn(2+)-binding residues include His-112 and His-114. Asp-115 contacts substrate. Asn-127 carries N-linked (GlcNAc...) asparagine glycosylation. Residues Asn-127–Asn-185 are PRB domain. Cys-137 and Cys-159 are disulfide-bonded. N-linked (GlcNAc...) asparagine glycosylation is found at Asn-174 and Asn-185. Substrate-binding positions include Trp-204–Phe-211, His-293, and Gly-326. His-356 provides a ligand contact to Zn(2+). Catalysis depends on Glu-359, which acts as the Proton donor. Residue Asn-378 is glycosylated (N-linked (GlcNAc...) asparagine). His-384 serves as the catalytic Proton acceptor. Asp-441 provides a ligand contact to Zn(2+). Asp-442 serves as a coordination point for substrate.

It belongs to the metallo-dependent hydrolases superfamily. Adenosine and AMP deaminases family. ADGF subfamily. In terms of assembly, homodimer. Interacts with adenosine receptors. Binds heparin. Zn(2+) serves as cofactor. In terms of tissue distribution, detected in blood plasma (at protein level). Widely expressed, with most abundant expression in human adult heart, lung, lymphoblasts, and placenta as well as fetal lung, liver, and kidney. In embryo, expressed in the outflow tract and atrium of the developing heart, the VII/VIII cranial nerve ganglion, and the notochord.

The protein resides in the secreted. It catalyses the reaction adenosine + H2O + H(+) = inosine + NH4(+). Functionally, adenosine deaminase that may contribute to the degradation of extracellular adenosine, a signaling molecule that controls a variety of cellular responses. Requires elevated adenosine levels for optimal enzyme activity. Binds to cell surfaces via proteoglycans and may play a role in the regulation of cell proliferation and differentiation, independently of its enzyme activity. In Homo sapiens (Human), this protein is Adenosine deaminase 2.